The primary structure comprises 260 residues: Adenosylcobinamide-GDP ribazoletransferase (260 aa).

6 consecutive transmembrane segments (helical) span residues 40 to 60 (AFPL…FMAY), 64 to 84 (LPPL…TGAL), 117 to 137 (FAAL…MTII), 192 to 212 (GIGL…LSLI), 214 to 234 (ALVL…AKIG), and 240 to 260 (TLGA…VMAL).

The protein belongs to the CobS family. Mg(2+) serves as cofactor.

The protein resides in the cell inner membrane. The catalysed reaction is alpha-ribazole + adenosylcob(III)inamide-GDP = adenosylcob(III)alamin + GMP + H(+). It catalyses the reaction alpha-ribazole 5'-phosphate + adenosylcob(III)inamide-GDP = adenosylcob(III)alamin 5'-phosphate + GMP + H(+). Its pathway is cofactor biosynthesis; adenosylcobalamin biosynthesis; adenosylcobalamin from cob(II)yrinate a,c-diamide: step 7/7. In terms of biological role, joins adenosylcobinamide-GDP and alpha-ribazole to generate adenosylcobalamin (Ado-cobalamin). Also synthesizes adenosylcobalamin 5'-phosphate from adenosylcobinamide-GDP and alpha-ribazole 5'-phosphate. The protein is Adenosylcobinamide-GDP ribazoletransferase of Brucella anthropi (strain ATCC 49188 / DSM 6882 / CCUG 24695 / JCM 21032 / LMG 3331 / NBRC 15819 / NCTC 12168 / Alc 37) (Ochrobactrum anthropi).